Here is an 84-residue protein sequence, read N- to C-terminus: Large ribosomal subunit protein bL28 (84 aa).

This sequence belongs to the bacterial ribosomal protein bL28 family.

This chain is Large ribosomal subunit protein bL28, found in Deinococcus geothermalis (strain DSM 11300 / CIP 105573 / AG-3a).